The chain runs to 506 residues: Maturase K (506 aa).

Belongs to the intron maturase 2 family. MatK subfamily.

It localises to the plastid. Its subcellular location is the chloroplast. Functionally, usually encoded in the trnK tRNA gene intron. Probably assists in splicing its own and other chloroplast group II introns. This chain is Maturase K, found in Medicago truncatula (Barrel medic).